The chain runs to 83 residues: ATP synthase subunit c (83 aa).

A run of 2 helical transmembrane segments spans residues 10 to 30 and 52 to 72; these read IAVA…FGLL and MFIV…IALY.

Belongs to the ATPase C chain family. In terms of assembly, F-type ATPases have 2 components, F(1) - the catalytic core - and F(0) - the membrane proton channel. F(1) has five subunits: alpha(3), beta(3), gamma(1), delta(1), epsilon(1). F(0) has three main subunits: a(1), b(2) and c(10-14). The alpha and beta chains form an alternating ring which encloses part of the gamma chain. F(1) is attached to F(0) by a central stalk formed by the gamma and epsilon chains, while a peripheral stalk is formed by the delta and b chains.

It localises to the cell inner membrane. Its function is as follows. F(1)F(0) ATP synthase produces ATP from ADP in the presence of a proton or sodium gradient. F-type ATPases consist of two structural domains, F(1) containing the extramembraneous catalytic core and F(0) containing the membrane proton channel, linked together by a central stalk and a peripheral stalk. During catalysis, ATP synthesis in the catalytic domain of F(1) is coupled via a rotary mechanism of the central stalk subunits to proton translocation. Key component of the F(0) channel; it plays a direct role in translocation across the membrane. A homomeric c-ring of between 10-14 subunits forms the central stalk rotor element with the F(1) delta and epsilon subunits. The sequence is that of ATP synthase subunit c from Shewanella amazonensis (strain ATCC BAA-1098 / SB2B).